A 242-amino-acid chain; its full sequence is Uridylate kinase (242 aa).

15–18 lines the ATP pocket; sequence KLSG. Residue G57 participates in UMP binding. Residues G58 and R62 each contribute to the ATP site. UMP contacts are provided by residues D78 and 139 to 146; that span reads TGNPFFTT. 3 residues coordinate ATP: T166, Y172, and D175.

It belongs to the UMP kinase family. As to quaternary structure, homohexamer.

It is found in the cytoplasm. The catalysed reaction is UMP + ATP = UDP + ADP. Its pathway is pyrimidine metabolism; CTP biosynthesis via de novo pathway; UDP from UMP (UMPK route): step 1/1. Its activity is regulated as follows. Inhibited by UTP. Functionally, catalyzes the reversible phosphorylation of UMP to UDP. This Acinetobacter baylyi (strain ATCC 33305 / BD413 / ADP1) protein is Uridylate kinase.